Reading from the N-terminus, the 417-residue chain is Serine hydroxymethyltransferase 1 (417 aa).

Residues Leu-121 and 125 to 127 (GHL) contribute to the (6S)-5,6,7,8-tetrahydrofolate site. The residue at position 230 (Lys-230) is an N6-(pyridoxal phosphate)lysine. 355–357 (SPF) is a (6S)-5,6,7,8-tetrahydrofolate binding site.

This sequence belongs to the SHMT family. As to quaternary structure, homodimer. Pyridoxal 5'-phosphate serves as cofactor.

It localises to the cytoplasm. The catalysed reaction is (6R)-5,10-methylene-5,6,7,8-tetrahydrofolate + glycine + H2O = (6S)-5,6,7,8-tetrahydrofolate + L-serine. Its pathway is one-carbon metabolism; tetrahydrofolate interconversion. It functions in the pathway amino-acid biosynthesis; glycine biosynthesis; glycine from L-serine: step 1/1. In terms of biological role, catalyzes the reversible interconversion of serine and glycine with tetrahydrofolate (THF) serving as the one-carbon carrier. This reaction serves as the major source of one-carbon groups required for the biosynthesis of purines, thymidylate, methionine, and other important biomolecules. Also exhibits THF-independent aldolase activity toward beta-hydroxyamino acids, producing glycine and aldehydes, via a retro-aldol mechanism. This chain is Serine hydroxymethyltransferase 1, found in Pseudomonas aeruginosa (strain ATCC 15692 / DSM 22644 / CIP 104116 / JCM 14847 / LMG 12228 / 1C / PRS 101 / PAO1).